A 259-amino-acid polypeptide reads, in one-letter code: Chymotrypsin-1 (259 aa).

The N-terminal stretch at 1–17 (MLRKVFAVVSVLLVVSA) is a signal peptide. Residues 18–32 (AKVTKLVLDDNYVNR) constitute a propeptide, activation peptide. The region spanning 33-255 (VVGGEVAKNG…YHDWVRTTMA (223 aa)) is the Peptidase S1 domain. Cys59 and Cys75 are oxidised to a cystine. Active-site charge relay system residues include His74 and Asp119. Cystine bridges form between Cys182-Cys198 and Cys208-Cys232. Catalysis depends on Ser212, which acts as the Charge relay system.

The protein belongs to the peptidase S1 family. After blood feeding, expression is induced in the midgut epithelium, followed by secretion into the midgut lumen.

It is found in the secreted. It catalyses the reaction Preferential cleavage: Tyr-|-Xaa, Trp-|-Xaa, Phe-|-Xaa, Leu-|-Xaa.. The sequence is that of Chymotrypsin-1 (CHYM1) from Anopheles gambiae (African malaria mosquito).